Here is a 244-residue protein sequence, read N- to C-terminus: tRNA pseudouridine synthase A (244 aa).

The Nucleophile role is filled by aspartate 52. A substrate-binding site is contributed by tyrosine 110.

This sequence belongs to the tRNA pseudouridine synthase TruA family. As to quaternary structure, homodimer.

It carries out the reaction uridine(38/39/40) in tRNA = pseudouridine(38/39/40) in tRNA. Its function is as follows. Formation of pseudouridine at positions 38, 39 and 40 in the anticodon stem and loop of transfer RNAs. This is tRNA pseudouridine synthase A from Finegoldia magna (strain ATCC 29328 / DSM 20472 / WAL 2508) (Peptostreptococcus magnus).